The sequence spans 377 residues: Chaperone protein DnaJ (377 aa).

Positions 5 to 69 constitute a J domain; the sequence is EYYDRLGVSK…QKRAAYDQYG (65 aa). A CR-type zinc finger spans residues 133–215; the sequence is GTEKEVHYNR…CHGTGHEKQS (83 aa). 8 residues coordinate Zn(2+): cysteine 146, cysteine 149, cysteine 163, cysteine 166, cysteine 189, cysteine 192, cysteine 203, and cysteine 206. 4 CXXCXGXG motif repeats span residues 146–153, 163–170, 189–196, and 203–210; these read CHTCNGSG, CSKCHGSG, CDVCHGTG, and CPTCHGTG.

It belongs to the DnaJ family. As to quaternary structure, homodimer. The cofactor is Zn(2+).

It localises to the cytoplasm. Functionally, participates actively in the response to hyperosmotic and heat shock by preventing the aggregation of stress-denatured proteins and by disaggregating proteins, also in an autonomous, DnaK-independent fashion. Unfolded proteins bind initially to DnaJ; upon interaction with the DnaJ-bound protein, DnaK hydrolyzes its bound ATP, resulting in the formation of a stable complex. GrpE releases ADP from DnaK; ATP binding to DnaK triggers the release of the substrate protein, thus completing the reaction cycle. Several rounds of ATP-dependent interactions between DnaJ, DnaK and GrpE are required for fully efficient folding. Also involved, together with DnaK and GrpE, in the DNA replication of plasmids through activation of initiation proteins. The chain is Chaperone protein DnaJ from Streptococcus mutans serotype c (strain ATCC 700610 / UA159).